The chain runs to 366 residues: Histone-lysine N-methyltransferase SETD7 (366 aa).

MORN repeat units lie at residues 36–58 (FEGN…DGST), 59–81 (LEGY…DGGV), and 106–128 (FKGQ…DGGS). The SET domain maps to 214–336 (ERVYVADSLI…AEEELTVAYG (123 aa)). S-adenosyl-L-methionine-binding positions include 226 to 228 (AGE), N296, H297, and E356.

This sequence belongs to the class V-like SAM-binding methyltransferase superfamily. Histone-lysine methyltransferase family. SET7 subfamily. As to quaternary structure, interacts with IPF1/PDX-1.

The protein resides in the nucleus. The protein localises to the chromosome. The catalysed reaction is L-lysyl(4)-[histone H3] + S-adenosyl-L-methionine = N(6)-methyl-L-lysyl(4)-[histone H3] + S-adenosyl-L-homocysteine + H(+). The enzyme catalyses L-lysyl-[protein] + S-adenosyl-L-methionine = N(6)-methyl-L-lysyl-[protein] + S-adenosyl-L-homocysteine + H(+). Its function is as follows. Histone methyltransferase that specifically monomethylates 'Lys-4' of histone H3. H3 'Lys-4' methylation represents a specific tag for epigenetic transcriptional activation. Plays a central role in the transcriptional activation of genes such as collagenase or insulin. Recruited by IPF1/PDX-1 to the insulin promoter, leading to activate transcription. Also has methyltransferase activity toward non-histone proteins such as CGAS, p53/TP53, TAF10, and possibly TAF7 by recognizing and binding the [KR]-[STA]-K in substrate proteins. Monomethylates 'Lys-189' of TAF10, leading to increase the affinity of TAF10 for RNA polymerase II. Monomethylates 'Lys-372' of p53/TP53, stabilizing p53/TP53 and increasing p53/TP53-mediated transcriptional activation. Monomethylates 'Lys-491' of CGAS, promoting interaction between SGF29 and CGAS. The polypeptide is Histone-lysine N-methyltransferase SETD7 (Setd7) (Mus musculus (Mouse)).